A 387-amino-acid chain; its full sequence is Phosphoglycerate kinase (387 aa).

Substrate contacts are provided by residues aspartate 21–asparagine 23, arginine 36, histidine 59–arginine 62, arginine 113, and arginine 146. ATP is bound by residues lysine 197, glutamate 314, and glycine 340 to threonine 343.

It belongs to the phosphoglycerate kinase family. As to quaternary structure, monomer.

Its subcellular location is the cytoplasm. It carries out the reaction (2R)-3-phosphoglycerate + ATP = (2R)-3-phospho-glyceroyl phosphate + ADP. It participates in carbohydrate degradation; glycolysis; pyruvate from D-glyceraldehyde 3-phosphate: step 2/5. In Proteus mirabilis (strain HI4320), this protein is Phosphoglycerate kinase.